The chain runs to 211 residues: Histidine biosynthesis bifunctional protein HisIE (211 aa).

The interval 1–117 (MSTQTNTKSD…CWLDGNAHPF (117 aa)) is phosphoribosyl-AMP cyclohydrolase. A phosphoribosyl-ATP pyrophosphohydrolase region spans residues 118 to 211 (LNNLAELIAS…LARHQKAQRK (94 aa)).

The protein in the N-terminal section; belongs to the PRA-CH family. This sequence in the C-terminal section; belongs to the PRA-PH family.

The protein localises to the cytoplasm. The enzyme catalyses 1-(5-phospho-beta-D-ribosyl)-ATP + H2O = 1-(5-phospho-beta-D-ribosyl)-5'-AMP + diphosphate + H(+). It catalyses the reaction 1-(5-phospho-beta-D-ribosyl)-5'-AMP + H2O = 1-(5-phospho-beta-D-ribosyl)-5-[(5-phospho-beta-D-ribosylamino)methylideneamino]imidazole-4-carboxamide. The protein operates within amino-acid biosynthesis; L-histidine biosynthesis; L-histidine from 5-phospho-alpha-D-ribose 1-diphosphate: step 2/9. It functions in the pathway amino-acid biosynthesis; L-histidine biosynthesis; L-histidine from 5-phospho-alpha-D-ribose 1-diphosphate: step 3/9. In Shewanella oneidensis (strain ATCC 700550 / JCM 31522 / CIP 106686 / LMG 19005 / NCIMB 14063 / MR-1), this protein is Histidine biosynthesis bifunctional protein HisIE.